Reading from the N-terminus, the 134-residue chain is Large ribosomal subunit protein eL32 (134 aa).

Belongs to the eukaryotic ribosomal protein eL32 family.

This chain is Large ribosomal subunit protein eL32 (RpL32), found in Apis mellifera (Honeybee).